The primary structure comprises 333 residues: MSGDEMIFDPTMSKKKKKKKKPFMLDEEGDAQTEETQPSETKEVEPEPTEDKDVEADEEDSRKKDASDDLDDLNFFNQKKKKKKSKKIFDIDEAEEGIKDLKIESDVQEPAEPEEDLDIMLGNKKKKKKVVKFPDEDEVLEKDEALEDEDSKKDDGISFSNQTGPAWAGSERDYTYEELLNRVFNIMREKNPDMVAGEKRKFVMKPPQVVRVGTKKTSFVNFTDICKLLHRQPKHLLAFLLAELGTSGSIDGNNQLVIKGRFQQKQIENVLRRYIKEYVTCHTCRSPDTILQKDTRLYFLQCETCHSRCSVASIKTGFQAVTGRRAQLRAKAN.

Disordered regions lie at residues 1 to 87 (MSGD…KSKK), 98 to 117 (IKDLKIESDVQEPAEPEEDL), and 141 to 165 (EKDEALEDEDSKKDDGISFSNQTGP). Ser2 carries the N-acetylserine modification. Phosphoserine occurs at positions 2 and 13. Over residues 13-22 (SKKKKKKKKP) the composition is skewed to basic residues. At Thr36 the chain carries Phosphothreonine. Residues 40–51 (ETKEVEPEPTED) are compositionally biased toward basic and acidic residues. Ser67 bears the Phosphoserine mark. Residue Lys102 forms a Glycyl lysine isopeptide (Lys-Gly) (interchain with G-Cter in SUMO2) linkage. A Phosphoserine modification is found at Ser105. The span at 106-117 (DVQEPAEPEEDL) shows a compositional bias: acidic residues. A phosphoserine mark is found at Ser158 and Ser218. Lys265 and Lys293 each carry N6-acetyllysine. Residues 281–305 (CHTCRSPDTILQKDTRLYFLQCETC) form a C4-type zinc finger.

This sequence belongs to the eIF-2-beta/eIF-5 family. As to quaternary structure, eukaryotic translation initiation factor 2 eIF2 is a heterotrimeric complex composed of an alpha (EIF2S1), a beta (EIF2S2) and a gamma (EIF2S3) chain. eIF2 is member of the 43S pre-initiation complex (43S PIC). eIF2 forms a complex with at least CELF1/CUGBP1, CALR, CALR3, EIF2S1, EIF2S2, HSP90B1 and HSPA5. Interacts with BZW2/5MP1. Interacts with EIF5.

It is found in the cytoplasm. The protein resides in the cytosol. In terms of biological role, component of the eIF2 complex that functions in the early steps of protein synthesis by forming a ternary complex with GTP and initiator tRNA. This complex binds to a 40S ribosomal subunit, followed by mRNA binding to form a 43S pre-initiation complex (43S PIC). Junction of the 60S ribosomal subunit to form the 80S initiation complex is preceded by hydrolysis of the GTP bound to eIF2 and release of an eIF2-GDP binary complex. In order for eIF2 to recycle and catalyze another round of initiation, the GDP bound to eIF2 must exchange with GTP by way of a reaction catalyzed by eIF2B. The chain is Eukaryotic translation initiation factor 2 subunit 2 (EIF2S2) from Bos taurus (Bovine).